Consider the following 160-residue polypeptide: Major pollen allergen Bet v 1-A (160 aa).

Brassinolide is bound by residues Lys-55, Tyr-82, Tyr-84, and Asn-101.

It belongs to the BetVI family.

The protein resides in the cytoplasm. May be a general steroid carrier protein. This is Major pollen allergen Bet v 1-A (BETVIA) from Betula pendula (European white birch).